The sequence spans 234 residues: Phosphoribosylaminoimidazole-succinocarboxamide synthase (234 aa).

This sequence belongs to the SAICAR synthetase family.

It carries out the reaction 5-amino-1-(5-phospho-D-ribosyl)imidazole-4-carboxylate + L-aspartate + ATP = (2S)-2-[5-amino-1-(5-phospho-beta-D-ribosyl)imidazole-4-carboxamido]succinate + ADP + phosphate + 2 H(+). Its pathway is purine metabolism; IMP biosynthesis via de novo pathway; 5-amino-1-(5-phospho-D-ribosyl)imidazole-4-carboxamide from 5-amino-1-(5-phospho-D-ribosyl)imidazole-4-carboxylate: step 1/2. The polypeptide is Phosphoribosylaminoimidazole-succinocarboxamide synthase (Streptococcus pyogenes serotype M18 (strain MGAS8232)).